The chain runs to 225 residues: Suppressor of cytokine signaling 3 (225 aa).

Positions 22–33 (LKTFSSKSEYQL) are kinase inhibitory region (KIR). Residues 34–45 (VVNAVRKLQESG) form an extended SH2 subdomain (ESS) region. An SH2 domain is found at 46-142 (FYWSAVTGGE…APSFPSPPTE (97 aa)). The span at 131-142 (PGAPSFPSPPTE) shows a compositional bias: pro residues. The disordered stretch occupies residues 131-162 (PGAPSFPSPPTEPSSEVPEQPSAQPLPGSPPR). A compositionally biased stretch (low complexity) spans 143–155 (PSSEVPEQPSAQP). In terms of domain architecture, SOCS box spans 177–224 (VLSRPLSSNVATLQHLCRKTVNGHLDSYEKVTQLPGPIREFLDQYDAP).

As to quaternary structure, interacts with multiple activated proteins of the tyrosine kinase signaling pathway including IGF1 receptor, insulin receptor and JAK2. Binding to JAK2 is mediated through the KIR and SH2 domains to a phosphorylated tyrosine residue within the JAK2 JH1 domain. Binds specific activated tyrosine residues of the leptin, EPO, IL12, GSCF and gp130 receptors. Interaction with CSNK1E stabilizes SOCS3 protein. Component of the probable ECS(SOCS3) E3 ubiquitin-protein ligase complex which contains CUL5, RNF7/RBX2, Elongin BC complex and SOCS3. Interacts with CUL5, RNF7, ELOB and ELOC. Interacts with CUL2. Interacts with FGFR3. Interacts with INSR. Interacts with BCL10; this interaction may interfere with BCL10-binding with PELI2. Interacts with NOD2 (via CARD domain); the interaction promotes NOD2 degradation. Post-translationally, phosphorylated on tyrosine residues after stimulation by the cytokines, IL-2, EPO or IGF1. Widely expressed with high expression in heart, placenta, skeletal muscle, peripheral blood leukocytes, fetal and adult lung, and fetal liver and kidney. Lower levels in thymus.

The protein operates within protein modification; protein ubiquitination. Its function is as follows. SOCS family proteins form part of a classical negative feedback system that regulates cytokine signal transduction. SOCS3 is involved in negative regulation of cytokines that signal through the JAK/STAT pathway. Inhibits cytokine signal transduction by binding to tyrosine kinase receptors including IL6ST/gp130, LIF, erythropoietin, insulin, IL12, GCSF and leptin receptors. Binding to JAK2 inhibits its kinase activity and regulates IL6 signaling. Suppresses fetal liver erythropoiesis. Regulates onset and maintenance of allergic responses mediated by T-helper type 2 cells. Probable substrate recognition component of a SCF-like ECS (Elongin BC-CUL2/5-SOCS-box protein) E3 ubiquitin-protein ligase complex which mediates the ubiquitination and subsequent proteasomal degradation of target proteins. This Homo sapiens (Human) protein is Suppressor of cytokine signaling 3.